The sequence spans 374 residues: Erythronate-4-phosphate dehydrogenase (374 aa).

Substrate is bound by residues Ser45 and Thr67. Asp147 is an NAD(+) binding site. Arg208 is a catalytic residue. Asp232 is an NAD(+) binding site. Glu237 is an active-site residue. His254 serves as the catalytic Proton donor. NAD(+) is bound at residue Gly257.

The protein belongs to the D-isomer specific 2-hydroxyacid dehydrogenase family. PdxB subfamily. As to quaternary structure, homodimer.

It localises to the cytoplasm. The enzyme catalyses 4-phospho-D-erythronate + NAD(+) = (R)-3-hydroxy-2-oxo-4-phosphooxybutanoate + NADH + H(+). It participates in cofactor biosynthesis; pyridoxine 5'-phosphate biosynthesis; pyridoxine 5'-phosphate from D-erythrose 4-phosphate: step 2/5. Functionally, catalyzes the oxidation of erythronate-4-phosphate to 3-hydroxy-2-oxo-4-phosphonooxybutanoate. The sequence is that of Erythronate-4-phosphate dehydrogenase from Pseudoalteromonas atlantica (strain T6c / ATCC BAA-1087).